The primary structure comprises 204 residues: Probable GTP-binding protein EngB (204 aa).

A disordered region spans residues 1–21; it reads MKVSSAEFVTSGTRPAHYPPP. The region spanning 22 to 194 is the EngB-type G domain; sequence ELPEVAFAGR…WARIEVMLAA (173 aa). Residues 30 to 37, 57 to 61, 75 to 78, 142 to 145, and 173 to 175 each bind GTP; these read GRSNVGKS, GRTQL, DLPG, TKCD, and FSA. S37 and T59 together coordinate Mg(2+).

It belongs to the TRAFAC class TrmE-Era-EngA-EngB-Septin-like GTPase superfamily. EngB GTPase family. The cofactor is Mg(2+).

Functionally, necessary for normal cell division and for the maintenance of normal septation. The polypeptide is Probable GTP-binding protein EngB (Geobacter metallireducens (strain ATCC 53774 / DSM 7210 / GS-15)).